An 856-amino-acid chain; its full sequence is MISPDKQYESFTNLYNPSEIEKKWQLIWTENNLYKTDELTENSDKFYALSMFPYPSGNLHMGHVRNYVITDLIARFHRFKGKSVLHPMGWDAFGLPAENAAIERGISPSVWTKQNISHMRSQLKLLGLSVDWDREFATCDENYYIWTQYLFLELYKAGLVYQKESEVNWDPVDNTVLANEQVDSEGKSWRSGAVVEKKLLKQWFLRITNYADELLKDLEKLDNWPERVKIMQDNWIGKSIGTNINFNLNTNPEEKITVFTTRPDTLFGVTYLAISVNHSLIKYISDQETIQDIENLKQYLKNNKNNELEKIGIKTSLIAINPINSEPIPIWVASYVLDEYGTGAVMGVPAHDQRDFEFAKKNNIDIKQVIINDKSEKTNELDKAYVENGYLMNSDQYNFMENTIAKLKISEEGVDNGWAENKIQYRLRDWLISRQRYWGCPIPIVNCKKCGSVPLKQSELPVALPKDIDISANKINALGDNNHWINTTCPKCGIAAKKETDTMDTFMCSSWYFLRYPSSKCSNKPFEKIEINKWLPVDQYVGGVEHAILHLLYARFFTKALRDNELFEIDEPFKKLLTQGMVQAAAYKNNKTGKYVSPSDINDLSNPTDPIDNTKLEVLFEKMSKSKYNGIDPESVIKKYGADTARMFILFKAPPEKDLEWGDTDVEGQFRFLNRIWKLYINCAKDINSKSNSYPDREKSLIKSMNIAIKEISNDILNNQFNTAISELMKFYNSLANSINDVNNTLKIEALKTFCILLAPFAPHIAEEIWHLIGFKKSVHLEYWPSFNAEALKEDSYELVIQVNGKVRDKVKINNDMSEDQIKELTLKRPNILKWTQDKEIRKIIIVKGKIINIVV.

The 'HIGH' region signature appears at 53–63; sequence PYPSGNLHMGH. The short motif at 622–626 is the 'KMSKS' region element; sequence KMSKS. Lys-625 provides a ligand contact to ATP.

This sequence belongs to the class-I aminoacyl-tRNA synthetase family.

It is found in the cytoplasm. It carries out the reaction tRNA(Leu) + L-leucine + ATP = L-leucyl-tRNA(Leu) + AMP + diphosphate. This is Leucine--tRNA ligase from Prochlorococcus marinus (strain MIT 9215).